We begin with the raw amino-acid sequence, 162 residues long: 2-C-methyl-D-erythritol 2,4-cyclodiphosphate synthase (162 aa).

D12 and H14 together coordinate a divalent metal cation. Residues D12–H14 and H38–S39 each bind 4-CDP-2-C-methyl-D-erythritol 2-phosphate. An a divalent metal cation-binding site is contributed by H46. 4-CDP-2-C-methyl-D-erythritol 2-phosphate-binding positions include D60–G62, F65–D69, and R146.

The protein belongs to the IspF family. Homotrimer. A divalent metal cation serves as cofactor.

The enzyme catalyses 4-CDP-2-C-methyl-D-erythritol 2-phosphate = 2-C-methyl-D-erythritol 2,4-cyclic diphosphate + CMP. It functions in the pathway isoprenoid biosynthesis; isopentenyl diphosphate biosynthesis via DXP pathway; isopentenyl diphosphate from 1-deoxy-D-xylulose 5-phosphate: step 4/6. Its function is as follows. Involved in the biosynthesis of isopentenyl diphosphate (IPP) and dimethylallyl diphosphate (DMAPP), two major building blocks of isoprenoid compounds. Catalyzes the conversion of 4-diphosphocytidyl-2-C-methyl-D-erythritol 2-phosphate (CDP-ME2P) to 2-C-methyl-D-erythritol 2,4-cyclodiphosphate (ME-CPP) with a corresponding release of cytidine 5-monophosphate (CMP). This is 2-C-methyl-D-erythritol 2,4-cyclodiphosphate synthase from Bordetella petrii (strain ATCC BAA-461 / DSM 12804 / CCUG 43448).